The sequence spans 188 residues: ATP synthase subunit b (188 aa).

The chain crosses the membrane as a helical span at residues 7–26 (TAAAGAMTLFFASMAYASGD).

This sequence belongs to the ATPase B chain family. In terms of assembly, F-type ATPases have 2 components, F(1) - the catalytic core - and F(0) - the membrane proton channel. F(1) has five subunits: alpha(3), beta(3), gamma(1), delta(1), epsilon(1). F(0) has three main subunits: a(1), b(2) and c(10-14). The alpha and beta chains form an alternating ring which encloses part of the gamma chain. F(1) is attached to F(0) by a central stalk formed by the gamma and epsilon chains, while a peripheral stalk is formed by the delta and b chains.

It is found in the cell inner membrane. F(1)F(0) ATP synthase produces ATP from ADP in the presence of a proton or sodium gradient. F-type ATPases consist of two structural domains, F(1) containing the extramembraneous catalytic core and F(0) containing the membrane proton channel, linked together by a central stalk and a peripheral stalk. During catalysis, ATP synthesis in the catalytic domain of F(1) is coupled via a rotary mechanism of the central stalk subunits to proton translocation. In terms of biological role, component of the F(0) channel, it forms part of the peripheral stalk, linking F(1) to F(0). In Nitratidesulfovibrio vulgaris (strain DP4) (Desulfovibrio vulgaris), this protein is ATP synthase subunit b.